A 993-amino-acid polypeptide reads, in one-letter code: Chromosome transmission fidelity protein 18 homolog (993 aa).

Positions 26–72 (PDEFNAYDGPSTSKQAAEKQKENRAPVAALRDSTRLGNSTLGSPQLS) are disordered. Polar residues predominate over residues 60 to 72 (RLGNSTLGSPQLS). 427 to 434 (GPPGLGKT) contributes to the ATP binding site. Residues 892–913 (AAPKGGAPSAPAAKKKTSGAAA) form a disordered region. Over residues 894–913 (PKGGAPSAPAAKKKTSGAAA) the composition is skewed to low complexity.

Belongs to the activator 1 small subunits family. CTF18 subfamily. Component of the CTF18-RFC complex.

It is found in the nucleus. In terms of biological role, chromosome cohesion factor involved in sister chromatid cohesion and fidelity of chromosome transmission. Component of one of the cell nuclear antigen loader complexes, CTF18-replication factor C (CTF18-RFC). The CTF18-RFC complex catalyzes the ATP-dependent loading of PCNA onto primed and gapped DNA and has weak ATPase activity. The CTF18-RFC complex catalyzes the ATP-dependent loading of PCNA onto primed and gapped DNA. The protein is Chromosome transmission fidelity protein 18 homolog of Drosophila melanogaster (Fruit fly).